The chain runs to 283 residues: Undecaprenyl-diphosphatase (283 aa).

The next 8 helical transmembrane spans lie at 4 to 24 (LLIL…FLPI), 45 to 65 (ADLF…YEYW), 91 to 111 (QLGL…FTLA), 118 to 138 (LFNP…IFYV), 153 to 173 (VSLK…IPGT), 194 to 214 (AEFS…LDLL), 228 to 248 (ILGV…RWLV), and 258 to 278 (IFAW…WIFG).

It belongs to the UppP family.

It localises to the cell inner membrane. The catalysed reaction is di-trans,octa-cis-undecaprenyl diphosphate + H2O = di-trans,octa-cis-undecaprenyl phosphate + phosphate + H(+). Functionally, catalyzes the dephosphorylation of undecaprenyl diphosphate (UPP). Confers resistance to bacitracin. The polypeptide is Undecaprenyl-diphosphatase (Psychrobacter sp. (strain PRwf-1)).